Here is a 249-residue protein sequence, read N- to C-terminus: Probable amino-acid import ATP-binding protein YxeO (249 aa).

Residues 2-239 (ITVKNIRKAF…PKNERTKRFI (238 aa)) form the ABC transporter domain. ATP is bound at residue 34-41 (GPSGSGKS).

This sequence belongs to the ABC transporter superfamily. As to quaternary structure, the complex is composed of two ATP-binding proteins (YxeO), two transmembrane proteins (YxeN) and a solute-binding protein (YxeM).

The protein resides in the cell membrane. Its function is as follows. Probably part of the ABC transporter complex YxeMNO that could be involved in amino-acid import. May transport S-methylcysteine. Responsible for energy coupling to the transport system. This Bacillus subtilis (strain 168) protein is Probable amino-acid import ATP-binding protein YxeO (yxeO).